Here is a 391-residue protein sequence, read N- to C-terminus: Ferrochelatase (391 aa).

Fe cation contacts are provided by His196 and Glu281.

Belongs to the ferrochelatase family.

It localises to the cytoplasm. It carries out the reaction heme b + 2 H(+) = protoporphyrin IX + Fe(2+). The protein operates within porphyrin-containing compound metabolism; protoheme biosynthesis; protoheme from protoporphyrin-IX: step 1/1. Its function is as follows. Catalyzes the ferrous insertion into protoporphyrin IX. The sequence is that of Ferrochelatase from Prochlorococcus marinus (strain AS9601).